A 362-amino-acid polypeptide reads, in one-letter code: Transcription factor bHLH128 (362 aa).

The span at 1-16 (MYQSSSSTSSSSQRSS) shows a compositional bias: low complexity. 4 disordered regions span residues 1-23 (MYQSSSSTSSSSQRSSLPGGGGL), 78-106 (SDSTTCGVNNSSDGQKQLGNNNNNNSNKD), 120-140 (SQQHKSNDIGGGNSSGSYSLA), and 162-184 (LNQPTSDYSPQGGSNGGRGHSRL). Over residues 78-96 (SDSTTCGVNNSSDGQKQLG) the composition is skewed to polar residues. Residues 162–173 (LNQPTSDYSPQG) show a composition bias toward polar residues. Serine 189 carries the phosphoserine modification. The bHLH domain occupies 289–339 (CATHPRSIAERERRTRISGKLKKLQDLVPNMDKQTSYSDMLDLAVQHIKGL).

As to quaternary structure, homodimer.

It is found in the nucleus. This chain is Transcription factor bHLH128 (BHLH128), found in Arabidopsis thaliana (Mouse-ear cress).